The sequence spans 506 residues: Trans-cinnamate 4-monooxygenase (506 aa).

A helical membrane pass occupies residues 3–23 (DFVLLEKALLGLFIATIVAIT). (E)-cinnamate-binding positions include 214-219 (RSRLAQ) and Ala-307. Cys-448 serves as a coordination point for heme.

This sequence belongs to the cytochrome P450 family. Requires heme as cofactor.

The protein resides in the membrane. The enzyme catalyses (E)-cinnamate + reduced [NADPH--hemoprotein reductase] + O2 = (E)-4-coumarate + oxidized [NADPH--hemoprotein reductase] + H2O + H(+). It participates in phenylpropanoid metabolism; trans-4-coumarate biosynthesis; trans-4-coumarate from trans-cinnamate: step 1/1. Functionally, catalyzes the first oxidative step of the phenylpropanoid pathway in higher plants by transforming trans-cinnamate into p-coumarate. The compounds formed by this pathway are essential components for lignification, pollination, and defense against ultraviolet light, predators and pathogens. The chain is Trans-cinnamate 4-monooxygenase (CYP73A10) from Petroselinum crispum (Parsley).